Consider the following 370-residue polypeptide: Gap junction delta-4 protein (370 aa).

The Cytoplasmic portion of the chain corresponds to 1-19; it reads MEGVDLLGFLIITLNCNVT. Residues 20-40 form a helical membrane-spanning segment; the sequence is MXGKLWFVLTMLLRMLVIVLA. The Extracellular segment spans residues 41–76; it reads GRPVYQDEQERFVCNTLQPGCANVCYDVFSPVSHLR. A helical membrane pass occupies residues 77 to 97; sequence FWLIQGVCVLLPSAVFSVYVL. The Cytoplasmic portion of the chain corresponds to 98–146; sequence HRGATLAALGPRRCPEPRDTASGQRRCPGSCRERGGLEVPDFSAGYIIH. Residues 147–167 traverse the membrane as a helical segment; the sequence is LLLRTLLEAAFGALNYLLFGF. Residues 168-196 lie on the Extracellular side of the membrane; the sequence is LAPNKFPCTRPPCTGVVDCYVSRPTEKSL. A helical transmembrane segment spans residues 197-217; it reads LMLFLWAVSALSFLLGLADLV. Over 218–370 the chain is Cytoplasmic; the sequence is CSLRRLMRRR…HLRARKSEWV (153 aa). Positions 227 to 370 are disordered; it reads RPGPPTSPSI…HLRARKSEWV (144 aa). Positions 246–260 are enriched in basic and acidic residues; sequence PEGRPTDKEGGREQE. The span at 331 to 345 shows a compositional bias: low complexity; that stretch reads PSAAPSHLAAHPSCS.

It belongs to the connexin family. Delta-type subfamily. In terms of assembly, a connexon is composed of a hexamer of connexins.

It localises to the cell membrane. It is found in the cell junction. Its subcellular location is the gap junction. One gap junction consists of a cluster of closely packed pairs of transmembrane channels, the connexons, through which materials of low MW diffuse from one cell to a neighboring cell. The protein is Gap junction delta-4 protein (GJD4) of Macaca fascicularis (Crab-eating macaque).